The primary structure comprises 139 residues: Large ribosomal subunit protein uL16 (139 aa).

It belongs to the universal ribosomal protein uL16 family. In terms of assembly, part of the 50S ribosomal subunit.

Functionally, binds 23S rRNA and is also seen to make contacts with the A and possibly P site tRNAs. The polypeptide is Large ribosomal subunit protein uL16 (Picosynechococcus sp. (strain ATCC 27264 / PCC 7002 / PR-6) (Agmenellum quadruplicatum)).